Consider the following 343-residue polypeptide: Protein RecA (343 aa).

ATP is bound at residue 65 to 72 (GPESSGKT).

Belongs to the RecA family.

The protein resides in the cytoplasm. Functionally, can catalyze the hydrolysis of ATP in the presence of single-stranded DNA, the ATP-dependent uptake of single-stranded DNA by duplex DNA, and the ATP-dependent hybridization of homologous single-stranded DNAs. It interacts with LexA causing its activation and leading to its autocatalytic cleavage. This Pseudoalteromonas atlantica (strain T6c / ATCC BAA-1087) protein is Protein RecA.